Here is a 106-residue protein sequence, read N- to C-terminus: Putative protein SH (106 aa).

Residues 48–106 form a disordered region; the sequence is HSQQNNSGHQFGDRFHSKGHQDTEGRILWKEASTRTTDSTETADTQLVQRQGNGGICLS. The span at 58–80 shows a compositional bias: basic and acidic residues; the sequence is FGDRFHSKGHQDTEGRILWKEAS. Low complexity predominate over residues 81-92; that stretch reads TRTTDSTETADT.

As to expression, heart.

May be involved with the regulation of GNRH gene expression. It is not known if this protein is transcribed. This Rattus norvegicus (Rat) protein is Putative protein SH.